The primary structure comprises 475 residues: MSPQTETKAGVGFKAGVKDYRLTYFTPDYETKDTDILAAFRMTPQPGVPPEEAGAAVAAESSTGTWTTVWTDGLTSLDRYKGRCYNIEPVAGEDNQFIAYVAYPLDLFEEGSVTNLFTSIVGNVFGFKALRALRLEDLRIPPAYSKTFIGPPHGIQVERDKLNKYGRPLLGCTIKPKLGLSAKNYGRAVYECLRGGLDFTKDDENVNSQPFMRWRDRFLFVAEALFKSQAETGEIKGHYLNATAGTCEEMLKRAVFARELGAPIVMHDYLTGGFTANTSLAFYCRDNGLLLHIHRAMHAVIDRQKNHGIHFRVLAKALRMSGGDHIHTGTVVGKLEGERDLTLGFVDLLRDDFIEKDRSRGIYFTQDWVSMPGVLPVASGGIHVWHMPALTEIFGDDSVLQFGGGTLGHPWGNAPGAVANRVAVEACVQARNEGRDLATEGNDIIREAAKWSPELAAACEVWKEIKFEYEAMDTL.

Residues 1-2 constitute a propeptide that is removed on maturation; sequence MS. An N-acetylproline modification is found at Pro-3. The residue at position 14 (Lys-14) is an N6,N6,N6-trimethyllysine. Substrate-binding residues include Asn-123 and Thr-173. Lys-175 functions as the Proton acceptor in the catalytic mechanism. Lys-177 is a binding site for substrate. Residues Lys-201, Asp-203, and Glu-204 each contribute to the Mg(2+) site. Position 201 is an N6-carboxylysine (Lys-201). The Proton acceptor role is filled by His-294. The substrate site is built by Arg-295, His-327, and Ser-379.

It belongs to the RuBisCO large chain family. Type I subfamily. As to quaternary structure, heterohexadecamer of 8 large chains and 8 small chains; disulfide-linked. The disulfide link is formed within the large subunit homodimers. Mg(2+) is required as a cofactor. Post-translationally, the disulfide bond which can form in the large chain dimeric partners within the hexadecamer appears to be associated with oxidative stress and protein turnover.

Its subcellular location is the plastid. It localises to the chloroplast. It carries out the reaction 2 (2R)-3-phosphoglycerate + 2 H(+) = D-ribulose 1,5-bisphosphate + CO2 + H2O. It catalyses the reaction D-ribulose 1,5-bisphosphate + O2 = 2-phosphoglycolate + (2R)-3-phosphoglycerate + 2 H(+). In terms of biological role, ruBisCO catalyzes two reactions: the carboxylation of D-ribulose 1,5-bisphosphate, the primary event in carbon dioxide fixation, as well as the oxidative fragmentation of the pentose substrate in the photorespiration process. Both reactions occur simultaneously and in competition at the same active site. This is Ribulose bisphosphate carboxylase large chain from Equisetum arvense (Field horsetail).